The primary structure comprises 405 residues: L-carnitine CoA-transferase (405 aa).

Residues Lys-97 and Arg-104 each contribute to the CoA site. Residue Asp-169 is the Nucleophile of the active site.

It belongs to the CoA-transferase III family. CaiB subfamily. In terms of assembly, homodimer.

The protein localises to the cytoplasm. It catalyses the reaction crotonobetainyl-CoA + (R)-carnitine = crotonobetaine + (R)-carnitinyl-CoA. The catalysed reaction is 4-(trimethylamino)butanoyl-CoA + (R)-carnitine = (R)-carnitinyl-CoA + 4-(trimethylamino)butanoate. The protein operates within amine and polyamine metabolism; carnitine metabolism. Catalyzes the reversible transfer of the CoA moiety from gamma-butyrobetainyl-CoA to L-carnitine to generate L-carnitinyl-CoA and gamma-butyrobetaine. Is also able to catalyze the reversible transfer of the CoA moiety from gamma-butyrobetainyl-CoA or L-carnitinyl-CoA to crotonobetaine to generate crotonobetainyl-CoA. This is L-carnitine CoA-transferase from Salmonella enteritidis PT4 (strain P125109).